The following is a 328-amino-acid chain: N-acetyl-gamma-glutamyl-phosphate reductase (328 aa).

C143 is an active-site residue.

The protein belongs to the NAGSA dehydrogenase family. Type 1 subfamily.

It is found in the cytoplasm. It catalyses the reaction N-acetyl-L-glutamate 5-semialdehyde + phosphate + NADP(+) = N-acetyl-L-glutamyl 5-phosphate + NADPH + H(+). Its pathway is amino-acid biosynthesis; L-arginine biosynthesis; N(2)-acetyl-L-ornithine from L-glutamate: step 3/4. In terms of biological role, catalyzes the NADPH-dependent reduction of N-acetyl-5-glutamyl phosphate to yield N-acetyl-L-glutamate 5-semialdehyde. The polypeptide is N-acetyl-gamma-glutamyl-phosphate reductase (Methanoregula boonei (strain DSM 21154 / JCM 14090 / 6A8)).